Reading from the N-terminus, the 338-residue chain is MEQELQNLENEAKASLTAICASESLEEFRIKYLGRKGLFTTVMRQLGSAPAEDRPRLGQLANTIKAQLEEQFEEKRSSLSQQTSSSDTYQSLPDLTLPGRQPAAGNLHPVTQVMQEVCAIFEAMGFSVAEGPDVEQDYYNFEALNIPAHHPARDMHDTFYVSGSTLLRTHTSPMQARVMEKQDPPLRMIAPGKVYRCDSDITHTPMFHQVEGLLVDKNISFADLKGVLTLFLQKIFKQDLPVRFRPSFFPFTEPSAEVDIACVMCGGKGCRVCKKTGWLEILGAGMVDPEVFKMVGYDPEVYSGFAFGLGIERIAMLKYRIDDIRLFYENDQRFLSQF.

The interval 71 to 101 (QFEEKRSSLSQQTSSSDTYQSLPDLTLPGRQ) is disordered. A compositionally biased stretch (low complexity) spans 78–92 (SLSQQTSSSDTYQSL). Residue Glu253 coordinates Mg(2+).

This sequence belongs to the class-II aminoacyl-tRNA synthetase family. Phe-tRNA synthetase alpha subunit type 1 subfamily. As to quaternary structure, tetramer of two alpha and two beta subunits. Requires Mg(2+) as cofactor.

It is found in the cytoplasm. It catalyses the reaction tRNA(Phe) + L-phenylalanine + ATP = L-phenylalanyl-tRNA(Phe) + AMP + diphosphate + H(+). The chain is Phenylalanine--tRNA ligase alpha subunit from Desulfotalea psychrophila (strain LSv54 / DSM 12343).